A 380-amino-acid chain; its full sequence is Carbonic anhydrase 2 (380 aa).

The signal sequence occupies residues 1–20; the sequence is MARTGALLLAALALAGCAQA. The Alpha-carbonic anhydrase domain occupies 38 to 322; sequence DHWDHSLNGE…HHHRRLLHNH (285 aa). 3 disulfides stabilise this stretch: cysteine 61/cysteine 264, cysteine 194/cysteine 198, and cysteine 296/cysteine 354. A glycan (N-linked (GlcNAc...) asparagine) is linked at asparagine 101. Histidine 112 (proton acceptor) is an active-site residue. N-linked (GlcNAc...) asparagine glycosylation is present at asparagine 135. Residues histidine 163, histidine 165, and histidine 182 each contribute to the Zn(2+) site. 260-261 contributes to the substrate binding site; that stretch reads TT. An N-linked (GlcNAc...) asparagine glycan is attached at asparagine 297.

This sequence belongs to the alpha-carbonic anhydrase family. Tetramer of two large and two small subunits linked by two disulfide bonds. Zn(2+) is required as a cofactor.

The protein localises to the periplasm. It carries out the reaction hydrogencarbonate + H(+) = CO2 + H2O. Reversible hydration of carbon dioxide. This chain is Carbonic anhydrase 2 (CAH2), found in Chlamydomonas reinhardtii (Chlamydomonas smithii).